A 469-amino-acid chain; its full sequence is ATP synthase subunit beta (469 aa).

Gly-153–Thr-160 is an ATP binding site.

It belongs to the ATPase alpha/beta chains family. F-type ATPases have 2 components, CF(1) - the catalytic core - and CF(0) - the membrane proton channel. CF(1) has five subunits: alpha(3), beta(3), gamma(1), delta(1), epsilon(1). CF(0) has three main subunits: a(1), b(2) and c(9-12). The alpha and beta chains form an alternating ring which encloses part of the gamma chain. CF(1) is attached to CF(0) by a central stalk formed by the gamma and epsilon chains, while a peripheral stalk is formed by the delta and b chains.

It localises to the cell inner membrane. It carries out the reaction ATP + H2O + 4 H(+)(in) = ADP + phosphate + 5 H(+)(out). Functionally, produces ATP from ADP in the presence of a proton gradient across the membrane. The catalytic sites are hosted primarily by the beta subunits. The sequence is that of ATP synthase subunit beta from Pseudothermotoga lettingae (strain ATCC BAA-301 / DSM 14385 / NBRC 107922 / TMO) (Thermotoga lettingae).